The chain runs to 160 residues: Nucleotide-binding protein Tgr7_1196 (160 aa).

The protein belongs to the YajQ family.

Its function is as follows. Nucleotide-binding protein. The polypeptide is Nucleotide-binding protein Tgr7_1196 (Thioalkalivibrio sulfidiphilus (strain HL-EbGR7)).